The following is a 385-amino-acid chain: Putative RNA methyltransferase YpsC (385 aa).

In terms of domain architecture, THUMP spans 44–156 (AICRANLWLR…KDQALITLDS (113 aa)).

It belongs to the methyltransferase superfamily. In terms of assembly, interacts with the RNA polymerase core.

The sequence is that of Putative RNA methyltransferase YpsC (ypsC) from Bacillus subtilis (strain 168).